The sequence spans 327 residues: Beta-ketoacyl-[acyl-carrier-protein] synthase III (327 aa).

Active-site residues include Cys114 and His254. The ACP-binding stretch occupies residues 255–259 (QANQR). Asn284 is a catalytic residue.

Belongs to the thiolase-like superfamily. FabH family. Homodimer.

It is found in the cytoplasm. The enzyme catalyses malonyl-[ACP] + acetyl-CoA + H(+) = 3-oxobutanoyl-[ACP] + CO2 + CoA. The protein operates within lipid metabolism; fatty acid biosynthesis. Functionally, catalyzes the condensation reaction of fatty acid synthesis by the addition to an acyl acceptor of two carbons from malonyl-ACP. Catalyzes the first condensation reaction which initiates fatty acid synthesis and may therefore play a role in governing the total rate of fatty acid production. Possesses both acetoacetyl-ACP synthase and acetyl transacylase activities. Its substrate specificity determines the biosynthesis of branched-chain and/or straight-chain of fatty acids. This Levilactobacillus brevis (strain ATCC 367 / BCRC 12310 / CIP 105137 / JCM 1170 / LMG 11437 / NCIMB 947 / NCTC 947) (Lactobacillus brevis) protein is Beta-ketoacyl-[acyl-carrier-protein] synthase III.